Here is a 410-residue protein sequence, read N- to C-terminus: MSDIKKAVLAYSGGLDTSVILKWLQDTYGCEIVTFTADFGQGEELEPARAKALQFGIKPENIFIDDLCEEFVRDFVFPMFRANTIYEGEYLLGTSIARPLIAKRQIEIARLTGADSVSHGATGKGNDQVRFELGYYALEPGIKVIVPWREWDLLSREKLMAYAEKHGIPVEMRHKQGGSPYSMDANLLHISYEGRHLENPNAEAEESMWRWTVSPEKAPDAPEIIEIEFKSGDPVAINGKAYKPHELLAELNRIGGMHGIGRLDLVENRFVGMKSRGCYETPGGTILLKAHRGIESITLDREVAHLKDDLMPRYASLIYNGLWWAPERLALQTLIDHTQQAVNGIVRLKLYKGSVSVISRDSANTLFDQNIATFDDDGGAYNQADAGGFIKLNALRMRIAETARRKRAKK.

ATP contacts are provided by residues 10 to 18 (AYSGGLDTS) and alanine 37. The L-citrulline site is built by tyrosine 90 and serine 95. Glycine 120 is a binding site for ATP. 3 residues coordinate L-aspartate: threonine 122, asparagine 126, and aspartate 127. L-citrulline is bound at residue asparagine 126. Arginine 130, serine 182, serine 191, glutamate 267, and tyrosine 279 together coordinate L-citrulline.

It belongs to the argininosuccinate synthase family. Type 1 subfamily. As to quaternary structure, homotetramer.

It localises to the cytoplasm. The enzyme catalyses L-citrulline + L-aspartate + ATP = 2-(N(omega)-L-arginino)succinate + AMP + diphosphate + H(+). It participates in amino-acid biosynthesis; L-arginine biosynthesis; L-arginine from L-ornithine and carbamoyl phosphate: step 2/3. The protein is Argininosuccinate synthase of Polynucleobacter necessarius subsp. necessarius (strain STIR1).